A 386-amino-acid chain; its full sequence is Lycopene beta-cyclase (386 aa).

4–34 contacts NAD(+); sequence DVLLAGAGLANGLIALALRAARPDLRVLLLD.

Belongs to the lycopene cyclase family. Requires FAD as cofactor.

It catalyses the reaction a carotenoid psi-end group = a carotenoid beta-end derivative. It carries out the reaction all-trans-lycopene = gamma-carotene. The enzyme catalyses gamma-carotene = all-trans-beta-carotene. Its pathway is carotenoid biosynthesis; astaxanthin biosynthesis. Its function is as follows. Catalyzes the double cyclization reaction which converts lycopene to beta-carotene. This Paracoccus sp. (strain N81106 / MBIC 01143) (Agrobacterium aurantiacum) protein is Lycopene beta-cyclase.